The chain runs to 196 residues: Glycerol-3-phosphate acyltransferase (196 aa).

The next 4 membrane-spanning stretches (helical) occupy residues 4 to 24, 70 to 90, 111 to 131, and 152 to 172; these read IYIA…GLIL, VLIA…LGAF, IGVL…LWLA, and IFLW…LTLL.

It belongs to the PlsY family. As to quaternary structure, probably interacts with PlsX.

Its subcellular location is the cell inner membrane. It carries out the reaction an acyl phosphate + sn-glycerol 3-phosphate = a 1-acyl-sn-glycero-3-phosphate + phosphate. The protein operates within lipid metabolism; phospholipid metabolism. Functionally, catalyzes the transfer of an acyl group from acyl-phosphate (acyl-PO(4)) to glycerol-3-phosphate (G3P) to form lysophosphatidic acid (LPA). This enzyme utilizes acyl-phosphate as fatty acyl donor, but not acyl-CoA or acyl-ACP. This chain is Glycerol-3-phosphate acyltransferase, found in Rhodopseudomonas palustris (strain BisB5).